A 164-amino-acid chain; its full sequence is Cyclic pyranopterin monophosphate synthase (164 aa).

Substrate contacts are provided by residues 75–77 (MCH) and 116–117 (ME). The active site involves aspartate 131.

The protein belongs to the MoaC family. As to quaternary structure, homohexamer; trimer of dimers.

The enzyme catalyses (8S)-3',8-cyclo-7,8-dihydroguanosine 5'-triphosphate = cyclic pyranopterin phosphate + diphosphate. The protein operates within cofactor biosynthesis; molybdopterin biosynthesis. Its function is as follows. Catalyzes the conversion of (8S)-3',8-cyclo-7,8-dihydroguanosine 5'-triphosphate to cyclic pyranopterin monophosphate (cPMP). The protein is Cyclic pyranopterin monophosphate synthase of Staphylococcus aureus (strain USA300).